Reading from the N-terminus, the 149-residue chain is Nucleoside diphosphate kinase (149 aa).

ATP-binding residues include Lys-9, Phe-57, Arg-85, Thr-91, Arg-102, and Asn-112. His-115 functions as the Pros-phosphohistidine intermediate in the catalytic mechanism.

This sequence belongs to the NDK family. As to quaternary structure, homotetramer. It depends on Mg(2+) as a cofactor.

The protein localises to the cytoplasm. It carries out the reaction a 2'-deoxyribonucleoside 5'-diphosphate + ATP = a 2'-deoxyribonucleoside 5'-triphosphate + ADP. The catalysed reaction is a ribonucleoside 5'-diphosphate + ATP = a ribonucleoside 5'-triphosphate + ADP. Functionally, major role in the synthesis of nucleoside triphosphates other than ATP. The ATP gamma phosphate is transferred to the NDP beta phosphate via a ping-pong mechanism, using a phosphorylated active-site intermediate. The polypeptide is Nucleoside diphosphate kinase (Pelotomaculum thermopropionicum (strain DSM 13744 / JCM 10971 / SI)).